The following is a 317-amino-acid chain: 3-oxoacyl-[acyl-carrier-protein] reductase 5, chloroplastic (317 aa).

The transit peptide at 1 to 57 (TTVAATKLTSLKATAGKLGYREICQVRQWAPLKSAMPHFGMLRCATSTVVKAQAQAQ) directs the protein to the chloroplast. NADP(+) is bound at residue 79-103 (VTGASRGIGKAIALSLGKAGCKVLV). Substrate is bound at residue Ser-211. Tyr-224 acts as the Proton acceptor in catalysis.

It belongs to the short-chain dehydrogenases/reductases (SDR) family. Homotetramer.

The protein localises to the plastid. The protein resides in the chloroplast. The enzyme catalyses a (3R)-hydroxyacyl-[ACP] + NADP(+) = a 3-oxoacyl-[ACP] + NADPH + H(+). The protein operates within lipid metabolism; fatty acid biosynthesis. The protein is 3-oxoacyl-[acyl-carrier-protein] reductase 5, chloroplastic (bkr1) of Brassica napus (Rape).